A 195-amino-acid polypeptide reads, in one-letter code: Imidazoleglycerol-phosphate dehydratase (195 aa).

It belongs to the imidazoleglycerol-phosphate dehydratase family.

The protein resides in the cytoplasm. The enzyme catalyses D-erythro-1-(imidazol-4-yl)glycerol 3-phosphate = 3-(imidazol-4-yl)-2-oxopropyl phosphate + H2O. It functions in the pathway amino-acid biosynthesis; L-histidine biosynthesis; L-histidine from 5-phospho-alpha-D-ribose 1-diphosphate: step 6/9. The chain is Imidazoleglycerol-phosphate dehydratase from Polynucleobacter asymbioticus (strain DSM 18221 / CIP 109841 / QLW-P1DMWA-1) (Polynucleobacter necessarius subsp. asymbioticus).